The chain runs to 118 residues: Holo-[acyl-carrier-protein] synthase (118 aa).

Asp8 and Glu58 together coordinate Mg(2+).

It belongs to the P-Pant transferase superfamily. AcpS family. Mg(2+) serves as cofactor.

The protein resides in the cytoplasm. The enzyme catalyses apo-[ACP] + CoA = holo-[ACP] + adenosine 3',5'-bisphosphate + H(+). Transfers the 4'-phosphopantetheine moiety from coenzyme A to a Ser of acyl-carrier-protein. The chain is Holo-[acyl-carrier-protein] synthase from Streptococcus pyogenes serotype M5 (strain Manfredo).